A 252-amino-acid polypeptide reads, in one-letter code: Ubiquinone biosynthesis O-methyltransferase (252 aa).

Residues Arg36, Gly60, Asp81, and Leu123 each coordinate S-adenosyl-L-methionine.

The protein belongs to the methyltransferase superfamily. UbiG/COQ3 family.

It carries out the reaction a 3-demethylubiquinol + S-adenosyl-L-methionine = a ubiquinol + S-adenosyl-L-homocysteine + H(+). It catalyses the reaction a 3-(all-trans-polyprenyl)benzene-1,2-diol + S-adenosyl-L-methionine = a 2-methoxy-6-(all-trans-polyprenyl)phenol + S-adenosyl-L-homocysteine + H(+). Its pathway is cofactor biosynthesis; ubiquinone biosynthesis. O-methyltransferase that catalyzes the 2 O-methylation steps in the ubiquinone biosynthetic pathway. The sequence is that of Ubiquinone biosynthesis O-methyltransferase from Rickettsia prowazekii (strain Madrid E).